Reading from the N-terminus, the 211-residue chain is Protein-L-isoaspartate O-methyltransferase (211 aa).

Residue Ser-62 is part of the active site.

The protein belongs to the methyltransferase superfamily. L-isoaspartyl/D-aspartyl protein methyltransferase family.

Its subcellular location is the cytoplasm. The enzyme catalyses [protein]-L-isoaspartate + S-adenosyl-L-methionine = [protein]-L-isoaspartate alpha-methyl ester + S-adenosyl-L-homocysteine. Functionally, catalyzes the methyl esterification of L-isoaspartyl residues in peptides and proteins that result from spontaneous decomposition of normal L-aspartyl and L-asparaginyl residues. It plays a role in the repair and/or degradation of damaged proteins. The polypeptide is Protein-L-isoaspartate O-methyltransferase (Shewanella sp. (strain MR-4)).